The primary structure comprises 267 residues: tRNA pseudouridine synthase A (267 aa).

The active-site Nucleophile is the aspartate 54. Tyrosine 114 serves as a coordination point for substrate.

This sequence belongs to the tRNA pseudouridine synthase TruA family. In terms of assembly, homodimer.

It catalyses the reaction uridine(38/39/40) in tRNA = pseudouridine(38/39/40) in tRNA. Its function is as follows. Formation of pseudouridine at positions 38, 39 and 40 in the anticodon stem and loop of transfer RNAs. This Tropheryma whipplei (strain Twist) (Whipple's bacillus) protein is tRNA pseudouridine synthase A.